A 538-amino-acid chain; its full sequence is Probable inorganic phosphate transporter 1-4 (538 aa).

Topologically, residues 1 to 23 (MAGELKVLNALDSAKTQWYHFTA) are cytoplasmic. A helical membrane pass occupies residues 24–44 (IVIAGMGFFTDAYDLFSISLV). Topologically, residues 45-69 (TKLLGRIYYFNPASKSPGSLPPNVS) are extracellular. A helical transmembrane segment spans residues 70–90 (AAVNGVAFCGTLAGQLFFGWL). The Cytoplasmic segment spans residues 91–98 (GDKMGRKK). A helical membrane pass occupies residues 99–119 (VYGMTLMLMVICCLASGLSFG). Topologically, residues 120–123 (SSAK) are extracellular. The helical transmembrane segment at 124-144 (GVMATLCFFRFWLGFGIGGDY) threads the bilayer. The Cytoplasmic segment spans residues 145–163 (PLSATIMSEYANKRTRGAF). A helical membrane pass occupies residues 164-184 (IAAVFAMQGFGNLTGGIVAII). The Extracellular portion of the chain corresponds to 185–210 (VSAAFKSRFDAPAYRDDRTGSTVPQA). A helical membrane pass occupies residues 211-231 (DYAWRIVLMFGAIPALLTYYW). Over 232-294 (RMKMPETARY…RQFLRRHGRH (63 aa)) the chain is Cytoplasmic. The helical transmembrane segment at 295 to 315 (LLGTTVCWFVLDIAFYSSNLF) threads the bilayer. Topologically, residues 316 to 346 (QKDIYTAVQWLPKADTMSALEEMFKISRAQT) are extracellular. Residues 347–367 (LVALCGTIPGYWFTVFFIDII) traverse the membrane as a helical segment. Residues 368–369 (GR) lie on the Cytoplasmic side of the membrane. The helical transmembrane segment at 370 to 390 (FVIQLGGFFFMTAFMLGLAVP) threads the bilayer. Residues 391–396 (YHHWTT) are Extracellular-facing. Residues 397–417 (PGNHIGFVVMYAFTFFFANFG) traverse the membrane as a helical segment. The Cytoplasmic segment spans residues 418–440 (PNSTTFIVPAEIFPARLRSTCHG). Residues 441 to 461 (ISAAAGKAGAIVGSFGFLYAA) form a helical membrane-spanning segment. At 462-481 (QSTDASKTDAGYPPGIGVRN) the chain is on the extracellular side. A helical membrane pass occupies residues 482 to 502 (SLFFLAGCNVIGFFFTFLVPE). At 503 to 538 (SKGKSLEELSGENEDDDDVPEAPATADHRTAPAPPA) the chain is on the cytoplasmic side. Residues 507-538 (SLEELSGENEDDDDVPEAPATADHRTAPAPPA) form a disordered region. Positions 511–522 (LSGENEDDDDVP) are enriched in acidic residues.

This sequence belongs to the major facilitator superfamily. Phosphate:H(+) symporter (TC 2.A.1.9) family. Expressed at low levels in roots.

The protein resides in the membrane. Its function is as follows. High-affinity transporter for external inorganic phosphate. The polypeptide is Probable inorganic phosphate transporter 1-4 (PHT1-4) (Oryza sativa subsp. japonica (Rice)).